A 1137-amino-acid chain; its full sequence is DENN domain-containing protein 2B (1137 aa).

Positions 1 to 12 are enriched in polar residues; sequence MTMTANKNSSIT. The tract at residues 1 to 99 is disordered; sequence MTMTANKNSS…PTCPFKTASF (99 aa). Phosphoserine occurs at positions 30 and 32. Residues 32 to 43 are compositionally biased toward pro residues; that stretch reads SPPPVLSPPRSP. A compositionally biased stretch (polar residues) spans 49–64; that stretch reads DSETSACRYPSHSSSR. Residues 73-92 are compositionally biased toward pro residues; the sequence is PAPSPQNPQDPSPDTSPPTC. Phosphothreonine is present on T231. S233 carries the post-translational modification Phosphoserine. A disordered region spans residues 293–573; sequence KEQPGRGLPQ…HRLPRLPKRH (281 aa). A compositionally biased stretch (low complexity) spans 324–348; that stretch reads EEPAGGASVSAGSRAVGVAGVAGEA. T364 carries the phosphothreonine modification. S368 is modified (phosphoserine). Low complexity predominate over residues 368 to 380; that stretch reads SPSSQRLPSKSSL. The segment covering 392–402 has biased composition (basic and acidic residues); it reads RTFEYEADKNP. The tract at residues 401–447 is interaction with ABL1; that stretch reads NPKSKPSNGLPPSPTPAAPPPLPSTPAPPVTRRPKKDMRGHRKSQSR. The span at 409-431 shows a compositional bias: pro residues; sequence GLPPSPTPAAPPPLPSTPAPPVT. The span at 432 to 446 shows a compositional bias: basic residues; that stretch reads RRPKKDMRGHRKSQS. The span at 456–481 shows a compositional bias: polar residues; it reads SSLQSLYPSSPTENGTENQPKFGSKS. T482 carries the phosphothreonine modification. Over residues 495 to 508 the composition is skewed to basic and acidic residues; sequence LPKENPYEDVDLKS. Polar residues-rich tracts occupy residues 514-524 and 539-558; these read KSQQLSENSLD and SPPTQLSLKPNSQSLRSGNW. S545 is subject to Phosphoserine. Over residues 562–573 the composition is skewed to basic residues; it reads KSHRLPRLPKRH. Phosphoserine occurs at positions 574 and 622. The disordered stretch occupies residues 641–661; that stretch reads IETASLRDENSESESDSDDRF. The uDENN domain maps to 698-846; that stretch reads EYFVVVSLKK…PFPAPGKTIK (149 aa). A cDENN domain is found at 868–1001; sequence RLEHVDFECL…LQAALEQALE (134 aa). The dDENN domain occupies 1003–1096; sequence KNELISQDSD…QDRELRKCRA (94 aa).

In terms of assembly, interacts with ITSN1 and GRB2. Isoform 1 interacts with the SH3 domain of ABL1. In terms of processing, phosphorylated. Phosphorylation decreases ITSN1 binding. In terms of tissue distribution, widely expressed with the exception of peripheral blood lymphocytes. Isoform 1 is expressed in several epithelial and fibroblast (including tumorigenic) but absent in lymphoid cell lines (at protein level). Isoform 3 is expressed in primary cell or weakly tumorigenic but not in tumorigenic cell lines (at protein level).

The protein resides in the cytoplasm. It is found in the cell cortex. Its subcellular location is the cell membrane. It localises to the recycling endosome. May be involved in cytoskeletal organization and tumorogenicity. Seems to be involved in a signaling transduction pathway leading to activation of MAPK1/ERK2. Plays a role in EGFR trafficking from recycling endosomes back to the cell membrane. Functionally, guanine nucleotide exchange factor (GEF) which may activate RAB9A and RAB9B. Promotes the exchange of GDP to GTP, converting inactive GDP-bound Rab proteins into their active GTP-bound form. Its function is as follows. May block ERK2 activation stimulated by ABL1. May alter cell morphology and cell growth. This Homo sapiens (Human) protein is DENN domain-containing protein 2B.